The sequence spans 287 residues: 4-hydroxybenzoate octaprenyltransferase (287 aa).

8 consecutive transmembrane segments (helical) span residues 19–39, 42–62, 95–115, 136–156, 166–186, 210–230, 233–253, and 264–284; these read IGSL…ADGL, WHVL…GCVI, FFAV…TLTI, YLPQ…AYAA, WLLF…YAMV, IIGL…SQLA, GIYY…QWLI, and AFLN…ASVL.

This sequence belongs to the UbiA prenyltransferase family. Mg(2+) serves as cofactor.

The protein resides in the cell inner membrane. The enzyme catalyses all-trans-octaprenyl diphosphate + 4-hydroxybenzoate = 4-hydroxy-3-(all-trans-octaprenyl)benzoate + diphosphate. It participates in cofactor biosynthesis; ubiquinone biosynthesis. Catalyzes the prenylation of para-hydroxybenzoate (PHB) with an all-trans polyprenyl group. Mediates the second step in the final reaction sequence of ubiquinone-8 (UQ-8) biosynthesis, which is the condensation of the polyisoprenoid side chain with PHB, generating the first membrane-bound Q intermediate 3-octaprenyl-4-hydroxybenzoate. This is 4-hydroxybenzoate octaprenyltransferase from Aliivibrio fischeri (strain MJ11) (Vibrio fischeri).